The chain runs to 458 residues: MNVILEQLKTHTQNKPNDIALHIDDETITYSQLNARITSAVESLQKYSLNPVVAINMKSPVQSIICYLALHRLHKVPMMMEGKWQSTIHRQLIEKYGIKDVIGDTGLMQNIDSPMFIDSTQLQHYPNLLHIGFTSGTTGLPKAYYRDEDSWLASFEVNEMLMLKNENAIAAPGPLSHSLTLYALLFALSSGRTFIGQTTFHPEKLLNQCHKISSYKVAMFLVPTMIKSLLLVYNNEHTIQSFFSSGDKLHSSIFKKIKNQANDINLIEFFGTSETSFISYNLNQQAPVESVGVLFPNVELKTTNHDHNGIGTICIKSNMMFSGYVSEQCINNDEWFVTNDNGYVKEQYLYLTGRQQDMLIIGGQNIYPAHVERLLTQSSSIDEAIIIGIPNERFGQIGVLLYSGDVTLTHKNVKQFLKKKVKRYEIPSMIHHVEKMYYTASGKIAREKMMSMYLRGEL.

This sequence belongs to the ATP-dependent AMP-binding enzyme family.

The protein is Putative long chain fatty acid-CoA ligase VraA (vraA) of Staphylococcus aureus (strain Mu3 / ATCC 700698).